Reading from the N-terminus, the 178-residue chain is Caveolin-1 (178 aa).

An N-acetylserine modification is found at serine 2. At serine 2 the chain carries Phosphoserine. Positions 2-94 (SGGKYVDSEG…WKASFTTFTV (93 aa)) are required for homooligomerization. Residues 2–104 (SGGKYVDSEG…TKYWFYRLLS (103 aa)) are Cytoplasmic-facing. At lysine 5 the chain carries N6-acetyllysine; alternate. Lysine 5 is covalently cross-linked (Glycyl lysine isopeptide (Lys-Gly) (interchain with G-Cter in ubiquitin); alternate). A Phosphotyrosine modification is found at tyrosine 6. Phosphoserine is present on serine 9. Residue tyrosine 14 is modified to Phosphotyrosine; by ABL1. Residue tyrosine 25 is modified to Phosphotyrosine. Glycyl lysine isopeptide (Lys-Gly) (interchain with G-Cter in ubiquitin) cross-links involve residues lysine 26, lysine 30, lysine 39, lysine 47, and lysine 57. Residues 82–94 (DGIWKASFTTFTV) are interaction with CAVIN3. An intramembrane region (helical) is located at residues 105 to 125 (TLFGIPMALIWGIYFAILSFL). Topologically, residues 126–178 (HIWAVVPCIKSFLIEIQCIGRVYSIYIHTFCDPLFEAVGKLFSNIRINMQKEI) are cytoplasmic. Residues 131 to 142 (VPCIKSFLIEIQ) form an interacts with SPRY1, SPRY2, SPRY3 and SPRY4 region. S-palmitoyl cysteine attachment occurs at residues cysteine 133, cysteine 143, and cysteine 156. Residues 149–160 (SIYIHTFCDPLF) form an interacts with SPRY1, SPRY2, and SPRY4 region. An interacts with SPRY1, SPRY2, SPRY3 and SPRY4 region spans residues 167-178 (FSNIRINMQKEI).

The protein belongs to the caveolin family. In terms of assembly, homooligomer. Interacts with GLIPR2. Interacts with NOSTRIN. Interacts with SNAP25 and STX1A. Interacts (via the N-terminus) with DPP4; the interaction is direct. Interacts with CTNNB1, CDH1 and JUP. Interacts with PACSIN2; this interaction induces membrane tubulation. Interacts with SLC7A9. Interacts with BMX and BTK. Interacts with TGFBR1. Interacts with CAVIN3 (via leucine-zipper domain) in a cholesterol-sensitive manner. Interacts with CAVIN1. Interacts with EHD2 in a cholesterol-dependent manner. Forms a ternary complex with UBXN6 and VCP; mediates CAV1 targeting to lysosomes for degradation. Interacts with ABCG1; this interaction regulates ABCG1-mediated cholesterol efflux. Interacts with NEU3; this interaction enhances NEU3 sialidase activity within caveola. Interacts (via C-terminus) with SPRY1, SPRY2 (via C-terminus), SPRY3, and SPRY4. Interacts with IGFBP5; this interaction allows trafficking of IGFBP5 from the plasma membrane to the nucleus. Post-translationally, phosphorylated at Tyr-14 by ABL1 in response to oxidative stress. In terms of processing, ubiquitinated. Undergo monoubiquitination and multi- and/or polyubiquitination. Monoubiquitination of N-terminal lysines promotes integration in a ternary complex with UBXN6 and VCP which promotes oligomeric CAV1 targeting to lysosomes for degradation. Ubiquitinated by ZNRF1; leading to degradation and modulation of the TLR4-mediated immune response.

The protein localises to the golgi apparatus membrane. Its subcellular location is the cell membrane. The protein resides in the membrane. It localises to the caveola. It is found in the membrane raft. May act as a scaffolding protein within caveolar membranes. Forms a stable heterooligomeric complex with CAV2 that targets to lipid rafts and drives caveolae formation. Mediates the recruitment of CAVIN proteins (CAVIN1/2/3/4) to the caveolae. Interacts directly with G-protein alpha subunits and can functionally regulate their activity. Involved in the costimulatory signal essential for T-cell receptor (TCR)-mediated T-cell activation. Its binding to DPP4 induces T-cell proliferation and NF-kappa-B activation in a T-cell receptor/CD3-dependent manner. Recruits CTNNB1 to caveolar membranes and may regulate CTNNB1-mediated signaling through the Wnt pathway. Negatively regulates TGFB1-mediated activation of SMAD2/3 by mediating the internalization of TGFBR1 from membrane rafts leading to its subsequent degradation. Binds 20(S)-hydroxycholesterol (20(S)-OHC). The polypeptide is Caveolin-1 (CAV1) (Dasypus novemcinctus (Nine-banded armadillo)).